Reading from the N-terminus, the 295-residue chain is MEIRRRPPNPTVRVENLEYAVPHREAKAKNILEEIVWYKDTEIKNFKKIVSLEDLIKKLDKLSPPKDFFQSILHSKIKPGVIAEIKKASPSKGVIREDFKPKEIASCYEKSGASCISVLTDKRFFQGSYEILQDVRTATNLPLLCKDFIISAYQIYKARVSGADAILLIAAILSDDDLFYLKKIADNLKMSVLVEVHDGQELERILSLKSFNLIGINNRNLKTFKTDLKTSIRIMSKYSDIFSKHNIVPISESGINNSDDLKTLNSIGIKGVLIGERFMRESDIENSFKKLFNSI.

This sequence belongs to the TrpC family.

The enzyme catalyses 1-(2-carboxyphenylamino)-1-deoxy-D-ribulose 5-phosphate + H(+) = (1S,2R)-1-C-(indol-3-yl)glycerol 3-phosphate + CO2 + H2O. The protein operates within amino-acid biosynthesis; L-tryptophan biosynthesis; L-tryptophan from chorismate: step 4/5. This Prochlorococcus marinus subsp. pastoris (strain CCMP1986 / NIES-2087 / MED4) protein is Indole-3-glycerol phosphate synthase.